The sequence spans 35 residues: Photosystem II reaction center protein M (35 aa).

Residues 5–25 form a helical membrane-spanning segment; that stretch reads ILAVIATALFIIIPTSFLLIL.

It belongs to the PsbM family. PSII is composed of 1 copy each of membrane proteins PsbA, PsbB, PsbC, PsbD, PsbE, PsbF, PsbH, PsbI, PsbJ, PsbK, PsbL, PsbM, PsbT, PsbX, PsbY, PsbZ, Psb30/Ycf12, at least 3 peripheral proteins of the oxygen-evolving complex and a large number of cofactors. It forms dimeric complexes.

It localises to the plastid. It is found in the chloroplast thylakoid membrane. In terms of biological role, one of the components of the core complex of photosystem II (PSII). PSII is a light-driven water:plastoquinone oxidoreductase that uses light energy to abstract electrons from H(2)O, generating O(2) and a proton gradient subsequently used for ATP formation. It consists of a core antenna complex that captures photons, and an electron transfer chain that converts photonic excitation into a charge separation. This subunit is found at the monomer-monomer interface. The protein is Photosystem II reaction center protein M of Staurastrum punctulatum (Green alga).